We begin with the raw amino-acid sequence, 463 residues long: Phosphoglucosamine mutase (463 aa).

The active-site Phosphoserine intermediate is Ser101. Mg(2+) contacts are provided by Ser101, Asp256, Asp258, and Asp260. Ser101 is subject to Phosphoserine.

The protein belongs to the phosphohexose mutase family. Requires Mg(2+) as cofactor. Post-translationally, activated by phosphorylation.

The enzyme catalyses alpha-D-glucosamine 1-phosphate = D-glucosamine 6-phosphate. In terms of biological role, catalyzes the conversion of glucosamine-6-phosphate to glucosamine-1-phosphate. In Desulforapulum autotrophicum (strain ATCC 43914 / DSM 3382 / VKM B-1955 / HRM2) (Desulfobacterium autotrophicum), this protein is Phosphoglucosamine mutase.